The primary structure comprises 218 residues: Leucine-rich repeat protein 1 (218 aa).

The N-terminal stretch at 1–27 (MASRNYRWELFAASLTLTLALIHLVEA) is a signal peptide. LRR repeat units follow at residues 94 to 117 (EHLQ…LGNL), 119 to 140 (NLIS…SLGK), 141 to 165 (LKSL…LTAI), and 167 to 190 (SLKV…PFAH).

In terms of assembly, interacts with HIR1.

Involved in plant defense response. This chain is Leucine-rich repeat protein 1, found in Arabidopsis thaliana (Mouse-ear cress).